Reading from the N-terminus, the 894-residue chain is Leucine--tRNA ligase, mitochondrial (894 aa).

The N-terminal 9 residues, 1–9 (MLSRPSSRF), are a transit peptide targeting the mitochondrion. Residues 56–66 (PYPSGALHIGH) carry the 'HIGH' region motif. The 'KMSKS' region motif lies at 646–650 (KMSKS). K649 serves as a coordination point for ATP.

It belongs to the class-I aminoacyl-tRNA synthetase family.

It localises to the mitochondrion matrix. It carries out the reaction tRNA(Leu) + L-leucine + ATP = L-leucyl-tRNA(Leu) + AMP + diphosphate. Its function is as follows. Catalyzes the attachment of leucine to tRNA(Leu) in the mitochondrion. This Saccharomyces cerevisiae (strain ATCC 204508 / S288c) (Baker's yeast) protein is Leucine--tRNA ligase, mitochondrial (NAM2).